The following is a 506-amino-acid chain: Maturase K (506 aa).

The protein belongs to the intron maturase 2 family. MatK subfamily.

The protein resides in the plastid. It localises to the chloroplast. Usually encoded in the trnK tRNA gene intron. Probably assists in splicing its own and other chloroplast group II introns. This Lathyrus tingitanus (Tangier pea) protein is Maturase K.